The sequence spans 110 residues: Large ribosomal subunit protein uL22 (110 aa).

Belongs to the universal ribosomal protein uL22 family. In terms of assembly, part of the 50S ribosomal subunit.

Functionally, this protein binds specifically to 23S rRNA; its binding is stimulated by other ribosomal proteins, e.g. L4, L17, and L20. It is important during the early stages of 50S assembly. It makes multiple contacts with different domains of the 23S rRNA in the assembled 50S subunit and ribosome. In terms of biological role, the globular domain of the protein is located near the polypeptide exit tunnel on the outside of the subunit, while an extended beta-hairpin is found that lines the wall of the exit tunnel in the center of the 70S ribosome. In Paraburkholderia phytofirmans (strain DSM 17436 / LMG 22146 / PsJN) (Burkholderia phytofirmans), this protein is Large ribosomal subunit protein uL22.